We begin with the raw amino-acid sequence, 343 residues long: Anthranilate phosphoribosyltransferase (343 aa).

Residues glycine 86, glycine 89 to aspartate 90, threonine 94, asparagine 96 to threonine 99, lysine 114 to glycine 122, and serine 126 each bind 5-phospho-alpha-D-ribose 1-diphosphate. Glycine 86 contributes to the anthranilate binding site. Serine 98 provides a ligand contact to Mg(2+). Asparagine 117 is a binding site for anthranilate. Residue arginine 172 participates in anthranilate binding. Positions 231 and 232 each coordinate Mg(2+).

This sequence belongs to the anthranilate phosphoribosyltransferase family. Homodimer. Requires Mg(2+) as cofactor.

It carries out the reaction N-(5-phospho-beta-D-ribosyl)anthranilate + diphosphate = 5-phospho-alpha-D-ribose 1-diphosphate + anthranilate. It functions in the pathway amino-acid biosynthesis; L-tryptophan biosynthesis; L-tryptophan from chorismate: step 2/5. In terms of biological role, catalyzes the transfer of the phosphoribosyl group of 5-phosphorylribose-1-pyrophosphate (PRPP) to anthranilate to yield N-(5'-phosphoribosyl)-anthranilate (PRA). The protein is Anthranilate phosphoribosyltransferase of Prochlorococcus marinus subsp. pastoris (strain CCMP1986 / NIES-2087 / MED4).